A 230-amino-acid chain; its full sequence is Flagellar L-ring protein (230 aa).

Residues 1 to 21 (MMLKTVLRLPVCAALLALAAG) form the signal peptide. Cys-22 is lipidated: N-palmitoyl cysteine. Cys-22 carries S-diacylglycerol cysteine lipidation. Residues 34-53 (PLTAPPPPPPQPSARPNGSI) are disordered. Residues 36–46 (TAPPPPPPQPS) show a composition bias toward pro residues.

This sequence belongs to the FlgH family. As to quaternary structure, the basal body constitutes a major portion of the flagellar organelle and consists of four rings (L,P,S, and M) mounted on a central rod.

The protein resides in the cell outer membrane. Its subcellular location is the bacterial flagellum basal body. Functionally, assembles around the rod to form the L-ring and probably protects the motor/basal body from shearing forces during rotation. The chain is Flagellar L-ring protein from Bordetella bronchiseptica (strain ATCC BAA-588 / NCTC 13252 / RB50) (Alcaligenes bronchisepticus).